A 256-amino-acid chain; its full sequence is Thiazole synthase (256 aa).

Lysine 95 acts as the Schiff-base intermediate with DXP in catalysis. Residues glycine 156, 182–183 (AG), and 204–205 (NT) each bind 1-deoxy-D-xylulose 5-phosphate.

Belongs to the ThiG family. Homotetramer. Forms heterodimers with either ThiH or ThiS.

Its subcellular location is the cytoplasm. It catalyses the reaction [ThiS sulfur-carrier protein]-C-terminal-Gly-aminoethanethioate + 2-iminoacetate + 1-deoxy-D-xylulose 5-phosphate = [ThiS sulfur-carrier protein]-C-terminal Gly-Gly + 2-[(2R,5Z)-2-carboxy-4-methylthiazol-5(2H)-ylidene]ethyl phosphate + 2 H2O + H(+). The protein operates within cofactor biosynthesis; thiamine diphosphate biosynthesis. Functionally, catalyzes the rearrangement of 1-deoxy-D-xylulose 5-phosphate (DXP) to produce the thiazole phosphate moiety of thiamine. Sulfur is provided by the thiocarboxylate moiety of the carrier protein ThiS. In vitro, sulfur can be provided by H(2)S. The polypeptide is Thiazole synthase (Cronobacter sakazakii (strain ATCC BAA-894) (Enterobacter sakazakii)).